A 783-amino-acid chain; its full sequence is Tricorn protease-interacting factor F2 (783 aa).

Substrate is bound by residues Glu107 and 236–240 (GAMEN). His271 is a Zn(2+) binding site. Glu272 (proton acceptor) is an active-site residue. Residues His275 and Glu294 each coordinate Zn(2+).

It belongs to the peptidase M1 family. As to quaternary structure, monomer. Part of the Tricorn proteolytic complex. Zn(2+) serves as cofactor.

It is found in the cytoplasm. Functionally, proteases F1, F2 and F3 degrade oligopeptides produced by Tricorn (themselves probably produced by the proteasome), yielding free amino acids. In Thermoplasma volcanium (strain ATCC 51530 / DSM 4299 / JCM 9571 / NBRC 15438 / GSS1), this protein is Tricorn protease-interacting factor F2 (trf2).